The chain runs to 190 residues: Lipid A acyltransferase PagP (190 aa).

Residues 1-18 form the signal peptide; it reads MKRLISCLTIICALNASA. Residues H60, D103, and S104 contribute to the active site.

It belongs to the lipid A palmitoyltransferase family. In terms of assembly, homodimer.

It localises to the cell outer membrane. The enzyme catalyses a lipid A + a 1,2-diacyl-sn-glycero-3-phosphocholine = a hepta-acyl lipid A + a 2-acyl-sn-glycero-3-phosphocholine. It catalyses the reaction a lipid IVA + a 1,2-diacyl-sn-glycero-3-phosphocholine = a lipid IVB + a 2-acyl-sn-glycero-3-phosphocholine. The catalysed reaction is a lipid IIA + a 1,2-diacyl-sn-glycero-3-phosphocholine = a lipid IIB + a 2-acyl-sn-glycero-3-phosphocholine. In terms of biological role, transfers a fatty acid residue from the sn-1 position of a phospholipid to the N-linked hydroxyfatty acid chain on the proximal unit of lipid A or its precursors. The chain is Lipid A acyltransferase PagP from Legionella pneumophila subsp. pneumophila (strain Philadelphia 1 / ATCC 33152 / DSM 7513).